A 609-amino-acid polypeptide reads, in one-letter code: Glutamine--fructose-6-phosphate aminotransferase [isomerizing] (609 aa).

The active-site Nucleophile; for GATase activity is the Cys2. Positions 2 to 218 (CGIVGAIAQR…EGDIAEITRR (217 aa)) constitute a Glutamine amidotransferase type-2 domain. 2 consecutive SIS domains span residues 286-426 (ADEL…LKGL) and 458-599 (LAED…VDQP). Lys604 (for Fru-6P isomerization activity) is an active-site residue.

As to quaternary structure, homodimer.

It localises to the cytoplasm. It carries out the reaction D-fructose 6-phosphate + L-glutamine = D-glucosamine 6-phosphate + L-glutamate. Its function is as follows. Catalyzes the first step in hexosamine metabolism, converting fructose-6P into glucosamine-6P using glutamine as a nitrogen source. The polypeptide is Glutamine--fructose-6-phosphate aminotransferase [isomerizing] (Shigella flexneri).